Consider the following 313-residue polypeptide: Hydroxyphenylpyruvate reductase (313 aa).

NADP(+) contacts are provided by residues 152–155 (LGRI), 174–176 (SRS), and Ile230. The active site involves Arg232. Asp256 provides a ligand contact to NADP(+). The active site involves Glu261. The Proton donor role is filled by His279.

It belongs to the D-isomer specific 2-hydroxyacid dehydrogenase family.

It carries out the reaction (2R)-2-hydroxy-3-(4-hydroxyphenyl)propanoate + NAD(+) = 3-(4-hydroxyphenyl)pyruvate + NADH + H(+). It catalyses the reaction (2R)-2-hydroxy-3-(4-hydroxyphenyl)propanoate + NADP(+) = 3-(4-hydroxyphenyl)pyruvate + NADPH + H(+). The catalysed reaction is (2R)-3-(3,4-dihydroxyphenyl)lactate + NADP(+) = 3-(3,4-dihydroxyphenyl)pyruvate + NADPH + H(+). The enzyme catalyses (2R)-3-(3,4-dihydroxyphenyl)lactate + NAD(+) = 3-(3,4-dihydroxyphenyl)pyruvate + NADH + H(+). Catalyzes the NAD(P)H-dependent reduction of 4-hydroxyphenylpyruvate to 4-hydroxyphenyllactate and 3,4-dihydroxyphenylpyruvate to 3,4-dihydroxyphenyllactate in the biosynthesis of rosmarinic acid. Rosmarinic acid is an ester of caffeic acid and 3,4-dihydroxyphenyllactic acid. NADP is the preferred substrate. This is Hydroxyphenylpyruvate reductase (HPPR) from Plectranthus scutellarioides (Coleus).